A 510-amino-acid chain; its full sequence is NAD(P)H-quinone oxidoreductase subunit 2, chloroplastic (510 aa).

Helical transmembrane passes span 24–44 (LLLF…GLIL), 59–79 (WFYF…LFRW), 99–119 (IFQF…VEYI), 124–144 (MAIT…MFLC), 149–169 (LITI…LSGY), 183–203 (YLLM…WLYG), 295–315 (WHLL…LIAI), 323–343 (MLAY…IVGD), 347–367 (GYAS…GTFA), 395–415 (ALSS…AGFF), and 418–438 (LYLF…IGLL).

It belongs to the complex I subunit 2 family. NDH is composed of at least 16 different subunits, 5 of which are encoded in the nucleus.

The protein localises to the plastid. Its subcellular location is the chloroplast thylakoid membrane. It catalyses the reaction a plastoquinone + NADH + (n+1) H(+)(in) = a plastoquinol + NAD(+) + n H(+)(out). It carries out the reaction a plastoquinone + NADPH + (n+1) H(+)(in) = a plastoquinol + NADP(+) + n H(+)(out). In terms of biological role, NDH shuttles electrons from NAD(P)H:plastoquinone, via FMN and iron-sulfur (Fe-S) centers, to quinones in the photosynthetic chain and possibly in a chloroplast respiratory chain. The immediate electron acceptor for the enzyme in this species is believed to be plastoquinone. Couples the redox reaction to proton translocation, and thus conserves the redox energy in a proton gradient. The polypeptide is NAD(P)H-quinone oxidoreductase subunit 2, chloroplastic (Asparagus officinalis (Garden asparagus)).